The sequence spans 506 residues: Tubby protein homolog (506 aa).

The interval 36–244 is disordered; sequence QKQKKKRQEP…PSPTAPEQPV (209 aa). Composition is skewed to low complexity over residues 70–87 and 101–116; these read LVES…QVQE and PTAP…AATA. Residues 196–206 show a composition bias toward acidic residues; that stretch reads FDEDEEDEEEN. Low complexity-rich tracts occupy residues 207–221 and 230–243; these read SSSS…RPSS and EAAS…PEQP.

This sequence belongs to the TUB family. Interacts with GNAQ. Interacts with TULP1.

It localises to the cytoplasm. The protein localises to the nucleus. The protein resides in the secreted. It is found in the cell membrane. Functionally, functions in signal transduction from heterotrimeric G protein-coupled receptors. Binds to membranes containing phosphatidylinositol 4,5-bisphosphate. Can bind DNA (in vitro). May contribute to the regulation of transcription in the nucleus. Could be involved in the hypothalamic regulation of body weight. Contribute to stimulation of phagocytosis of apoptotic retinal pigment epithelium (RPE) cells and macrophages. This chain is Tubby protein homolog (TUB), found in Homo sapiens (Human).